The sequence spans 560 residues: MFRYIEKEARDSITAALEKLGIKVPPEIKLEEPPNPQLGDLASTVSFELAGKLRRAPIEITADIMSVIETPEIFETIESKGPYINFFVDYGRFSSRLLESIQDDYGSHPPRDERVILEHTSANPNGPLHIGHIRNAIIGDSLARILRMAGYDVETQYYVNDMGRQIAMIVWGLLNLDGDLEDYPGDKMDHRVGKLYFEVNQRLKENPGIRDEVDELIRKYEAGENEELFRKVVEYCLSGMEETMKRLHVHHDRFVWEGQFVRDGTVDRVIESLRKTGYTGENDVLYLDLEEFGLEKELVLTRSDGTSLYSTRDIAYHLQKSEEGDVIIDVLGSDHKLAAEQVGIAVELLGGKRPEVIFYEFITLPEGSMSTRRGVFISVDELMDEAHSRALHEVKKRRDLPDDVADDIAESIGNGAIRYYIARLSPEKHIVFRWDDALSFERGCASIQYAHARACKLLEKASFTGEEDIEDGWKPEGDERELVRLLARFPVVVEESALARRVHPVAQYAQDLANTFNSFYRSTPVIGSDFEGARLRLVDSVRKTLRNALNLLGIHAPETM.

Residues 122–132 carry the 'HIGH' region motif; that stretch reads ANPNGPLHIGH.

It belongs to the class-I aminoacyl-tRNA synthetase family.

It localises to the cytoplasm. The enzyme catalyses tRNA(Arg) + L-arginine + ATP = L-arginyl-tRNA(Arg) + AMP + diphosphate. The sequence is that of Arginine--tRNA ligase (argS) from Methanothermobacter thermautotrophicus (strain ATCC 29096 / DSM 1053 / JCM 10044 / NBRC 100330 / Delta H) (Methanobacterium thermoautotrophicum).